Consider the following 726-residue polypeptide: 1,4-alpha-glucan branching enzyme GlgB (726 aa).

Asp407 functions as the Nucleophile in the catalytic mechanism. The active-site Proton donor is the Glu460.

Belongs to the glycosyl hydrolase 13 family. GlgB subfamily. As to quaternary structure, monomer.

The catalysed reaction is Transfers a segment of a (1-&gt;4)-alpha-D-glucan chain to a primary hydroxy group in a similar glucan chain.. Its pathway is glycan biosynthesis; glycogen biosynthesis. In terms of biological role, catalyzes the formation of the alpha-1,6-glucosidic linkages in glycogen by scission of a 1,4-alpha-linked oligosaccharide from growing alpha-1,4-glucan chains and the subsequent attachment of the oligosaccharide to the alpha-1,6 position. The protein is 1,4-alpha-glucan branching enzyme GlgB of Hydrogenovibrio crunogenus (strain DSM 25203 / XCL-2) (Thiomicrospira crunogena).